The chain runs to 294 residues: Cyclin-dependent kinase A-1 (294 aa).

The Protein kinase domain maps to 4-287 (YEKEEKIGEG…ARQALEHEYF (284 aa)). ATP contacts are provided by residues 10-18 (IGEGTYGVV) and Lys-33. Residue Thr-14 is modified to Phosphothreonine. Tyr-15 bears the Phosphotyrosine mark. The Proton acceptor role is filled by Asp-127. Thr-161 bears the Phosphothreonine; by CAK mark.

This sequence belongs to the protein kinase superfamily. CMGC Ser/Thr protein kinase family. CDC2/CDKX subfamily. Post-translationally, phosphorylated at Thr-161 by CDKD-1. Expressed in the dividing region of the root apex and in differentiated cells such as those in the sclerenchyma, pericycle and parenchyma of the central cylinder.

It carries out the reaction L-seryl-[protein] + ATP = O-phospho-L-seryl-[protein] + ADP + H(+). The catalysed reaction is L-threonyl-[protein] + ATP = O-phospho-L-threonyl-[protein] + ADP + H(+). The enzyme catalyses [DNA-directed RNA polymerase] + ATP = phospho-[DNA-directed RNA polymerase] + ADP + H(+). The sequence is that of Cyclin-dependent kinase A-1 (CDKA-1) from Oryza sativa subsp. japonica (Rice).